The primary structure comprises 178 residues: Tetratricopeptide repeat protein 9C (178 aa).

TPR repeat units lie at residues 15 to 48, 79 to 114, and 115 to 148; these read ASSF…LRSL, ADCY…QPEN, and VKAL…APKD.

Belongs to the TTC9 family.

This chain is Tetratricopeptide repeat protein 9C (ttc9c), found in Xenopus tropicalis (Western clawed frog).